Reading from the N-terminus, the 278-residue chain is MKILSGREKAEQDLKQLKKELDELNLNRPIKLAIIQVGDKMESNRYVEQKLKKAKEIGIEAKCFKFDENITQKRLLLAMDEINENWDGILIQLPLPKHLPKEVILDAVPYEKDIDGLSHRNEFILYNEKNSDDKFFVPAAARAVLELIEHHEINYKKKKVAVVGRSHLVGKPVAHILKRRGASVSTFDENTPIKLVASADIVIVAIGVPKYIKAENIKQGAIIIDVGTNYDQNDPSVIFGDVDHESVKTKASAITPVPGGVGPLTVVCLLKNLVEIYK.

Residues G164 to S166 and T228 each bind NADP(+).

This sequence belongs to the tetrahydrofolate dehydrogenase/cyclohydrolase family. In terms of assembly, homodimer.

The catalysed reaction is (6R)-5,10-methylene-5,6,7,8-tetrahydrofolate + NADP(+) = (6R)-5,10-methenyltetrahydrofolate + NADPH. The enzyme catalyses (6R)-5,10-methenyltetrahydrofolate + H2O = (6R)-10-formyltetrahydrofolate + H(+). Its pathway is one-carbon metabolism; tetrahydrofolate interconversion. Functionally, catalyzes the oxidation of 5,10-methylenetetrahydrofolate to 5,10-methenyltetrahydrofolate and then the hydrolysis of 5,10-methenyltetrahydrofolate to 10-formyltetrahydrofolate. This is Bifunctional protein FolD from Mycoplasmopsis synoviae (strain 53) (Mycoplasma synoviae).